Reading from the N-terminus, the 620-residue chain is Ferric/cupric reductase transmembrane component 7 (620 aa).

Topologically, residues 1-45 (MIEERDLVLSNGIHCIADIHSELYARLKKESQAVTPWVYQKQYGK) are extracellular. A helical membrane pass occupies residues 46 to 66 (FVTYFVAVIIFLSLIKKLAFM). Topologically, residues 67 to 107 (YYDSSEEFLPEKKNSPTTPSVFLARIMTKLVAFNRYICYRK) are cytoplasmic. A helical membrane pass occupies residues 108-128 (FPTLIFSYLGIPTSVGTFLVV). Residues 129–167 (MATTLYTLLYCFVPHPFYRPCAGFGSPPLSVRAGIMAIS) lie on the Extracellular side of the membrane. Residues 161–320 (AGIMAISLVS…LAVKGYLRPG (160 aa)) enclose the Ferric oxidoreductase domain. The chain crosses the membrane as a helical span at residues 168-188 (LVSFVFSLSGKINVIGWLVGL). Residues 189–194 (SYEKIN) are Cytoplasmic-facing. Residues 195 to 215 (IYHQWASILCLFFSWVHVIPF) form a helical membrane-spanning segment. 2 residues coordinate heme: His-197 and His-211. Over 216–237 (LRQARHEGGYERMHQRWKASDM) the chain is Extracellular. Residues 238–258 (WRSGVPPILFLNLLWLSSLPI) form a helical membrane-spanning segment. The Cytoplasmic segment spans residues 259 to 265 (ARRHFYE). A helical transmembrane segment spans residues 266–286 (IFLQLHWILAVGFYISLFYHV). 2 residues coordinate heme: His-271 and His-285. Residues 287-292 (YPELNS) are Extracellular-facing. The helical transmembrane segment at 293-313 (HMYLVATIVVWFAQLFYRLAV) threads the bilayer. Topologically, residues 314-620 (KGYLRPGRSF…CYLHSESFGY (307 aa)) are cytoplasmic. Residues 321–419 (RSFMASTIAN…DGPYGGIERD (99 aa)) enclose the FAD-binding FR-type domain. An FAD-binding site is contributed by 369–375 (HPFSIFP). The disordered stretch occupies residues 519-544 (SDQSDLAKREKDTEFGQDDTESNSTF). Positions 523 to 532 (DLAKREKDTE) are enriched in basic and acidic residues.

Belongs to the ferric reductase (FRE) family. It depends on FAD as a cofactor.

The protein localises to the cell membrane. It catalyses the reaction 2 a Fe(II)-siderophore + NADP(+) + H(+) = 2 a Fe(III)-siderophore + NADPH. Its function is as follows. Cell surface metalloreductase. May be involved in copper homeostasis. The sequence is that of Ferric/cupric reductase transmembrane component 7 (FRE7) from Saccharomyces cerevisiae (strain YJM789) (Baker's yeast).